The chain runs to 562 residues: Solute carrier family 40 member 1 (562 aa).

Topologically, residues 1-20 (MDSPASKKPRCERFREFFKS) are cytoplasmic. The chain crosses the membrane as a helical span at residues 21 to 50 (AKFLIYVGHALSTWGDRMWNFAVAVFLVEL). D36 serves as a coordination point for Fe cation. Over 51-54 (YGNS) the chain is Extracellular. Residues 55–81 (LLLTAVYGLVVAGSVLLLGAIIGDWVD) form a helical membrane-spanning segment. Topologically, residues 82–84 (KNP) are cytoplasmic. Residues 85-115 (RLKVAQTSLVVQNSAVILCGALLMAVFQFKQ) traverse the membrane as a helical segment. Residues 116–123 (QLSSMYDG) lie on the Extracellular side of the membrane. The chain crosses the membrane as a helical span at residues 124 to 159 (WLLTTCYIMVISIANIANLASTAMSITIQRDWVVVV). Residues 160-161 (AG) lie on the Cytoplasmic side of the membrane. Residues 162–192 (DDRSKLADMNATVRIIDQLTNILAPMLVGQI) form a helical membrane-spanning segment. Residues 193–199 (MAFGSHF) lie on the Extracellular side of the membrane. A helical membrane pass occupies residues 200–226 (IGCGFISGWNLFSMCLEYFLLWKVYQK). At 227 to 300 (TPALAFKAGQ…DGWVAYYNQS (74 aa)) the chain is on the cytoplasmic side. Residues 301 to 327 (IFFAGMSLAFLYMTVLGFDCITTGYAY) form a helical membrane-spanning segment. Fe cation is bound at residue C320. The Extracellular portion of the chain corresponds to 328-332 (TQGLN). Residues 333-360 (GSVLSLLMGASAVSGICGTVAFTWIRKK) traverse the membrane as a helical segment. At 361–362 (CG) the chain is on the cytoplasmic side. A helical transmembrane segment spans residues 363–385 (LIRTGFIAGVTQLSCLTLCVASV). The Extracellular portion of the chain corresponds to 386–444 (FAPGSPFDLSVSPFEEVLRHLFGDSGSLRESPTFIPTTEPPIQANVTVFEEAPPVESYM). A helical transmembrane segment spans residues 445 to 474 (SVGLLFAGVIAARVGLWSFDLTVTQLIQEN). Residues 475–479 (VIESE) lie on the Cytoplasmic side of the membrane. Residues 480 to 504 (RGVINGVQNSMNYLLDLLHFIMVIL) form a helical membrane-spanning segment. A Fe cation-binding site is contributed by H498. The Extracellular segment spans residues 505–507 (APN). The helical transmembrane segment at 508-533 (PEAFGLLVIISVSFVAMGHMMYFRFA) threads the bilayer. Over 534–562 (YKSLGSRLFLFCSPEQKPDPNIPSLPNSV) the chain is Cytoplasmic.

The protein belongs to the ferroportin (FP) (TC 2.A.100) family. SLC40A subfamily. As to expression, expressed in the yolk sac and placenta.

It localises to the cell membrane. It is found in the basolateral cell membrane. It catalyses the reaction Fe(2+)(in) = Fe(2+)(out). Transports Fe(2+) from the inside of a cell to the outside of the cell, playing a key role for maintaining systemic iron homeostasis. May be involved in transfer of Fe(2+) between maternal and fetal circulation. The chain is Solute carrier family 40 member 1 (slc40a1) from Danio rerio (Zebrafish).